The chain runs to 104 residues: Gastrin (104 aa).

The first 21 residues, 1-21, serve as a signal peptide directing secretion; the sequence is MQRLCAHALILVLALAAFCEA. Residues 22-58 constitute a propeptide that is removed on maturation; the sequence is SWKPHSQLQDAPVAPGANKGQEPLRMDRLGPASHPRR. Residues 26–70 form a disordered region; the sequence is HSQLQDAPVAPGANKGQEPLRMDRLGPASHPRRQLGLQDPPHMVA. The residue at position 87 (Tyr-87) is a Sulfotyrosine. Phe-92 carries the post-translational modification Phenylalanine amide. Ser-96 is modified (phosphoserine). A propeptide spanning residues 96-104 is cleaved from the precursor; sequence SAEEGDQHP.

Belongs to the gastrin/cholecystokinin family. Sulfation enhances proteolytic processing, and blocks peptide degradation. Levels of sulfation differ between proteolytically-cleaved gastrins and between tissues.

It localises to the secreted. Functionally, gastrin stimulates the stomach mucosa to produce and secrete hydrochloric acid and the pancreas to secrete its digestive enzymes. It also stimulates smooth muscle contraction and increases blood circulation and water secretion in the stomach and intestine. In Ovis aries (Sheep), this protein is Gastrin (GAST).